A 1552-amino-acid polypeptide reads, in one-letter code: Nonribosomal peptide synthetase acrB (1552 aa).

Residues 129–564 form a condensation region; it reads ASFAQERIWF…PVANLAIFDE (436 aa). Residues 594–999 are adenylation; the sequence is RHCKAHPRDV…RMEGSAQVKI (406 aa). Positions 1110–1186 constitute a Carrier domain; that stretch reads APLGVEEEVM…AMARLLQPQE (77 aa). Ser-1146 carries the O-(pantetheine 4'-phosphoryl)serine modification. The interval 1226 to 1464 is thiolester reductase (R) domain; sequence LTGATGFLGR…DFVGVDAVAS (239 aa).

This sequence belongs to the NRP synthetase family.

It functions in the pathway secondary metabolite biosynthesis. Nonribosomal peptide synthetase; part of the cluster that mediates the biosynthesis of acurin A, a highly reduced polyketide coupled to a serine via a peptide bond. The activities of the highly reducing polyketide synthase acrA and the nonribosomal peptide synthetase acrB are collectively responsible for the synthesis of the acurin A core structure with a heptaketide backbone produced by acrA covalently fused to a L-serine by acrB. After the formation of the PK-NRP hybrid product, it is detached from acrB by reductive release to set up the formation of the lactam ring by aldol condensation. The hydrolyase acrC then catalyzes water loss to generate a double bond in the ring. This double bond is probably reduced, which is followed by three oxidations at C-22 to generate the carboxylic acid moiety, involving probably the FAD-binding monooxygenase acrE and the cytochrome P450 monooxygenases acrD and acrF. Finally, a last methylation step performed by the O-methyltransferase acrG leads to the production of acurin A. This is Nonribosomal peptide synthetase acrB from Aspergillus aculeatus (strain ATCC 16872 / CBS 172.66 / WB 5094).